The sequence spans 450 residues: Phosphoglucosamine mutase 2 (450 aa).

S101 serves as the catalytic Phosphoserine intermediate. 4 residues coordinate Mg(2+): S101, D245, D247, and D249. S101 bears the Phosphoserine mark.

It belongs to the phosphohexose mutase family. It depends on Mg(2+) as a cofactor. Post-translationally, activated by phosphorylation.

The enzyme catalyses alpha-D-glucosamine 1-phosphate = D-glucosamine 6-phosphate. Its function is as follows. Catalyzes the conversion of glucosamine-6-phosphate to glucosamine-1-phosphate. The protein is Phosphoglucosamine mutase 2 of Shewanella sp. (strain MR-7).